The chain runs to 188 residues: Cytochrome b561 homolog 2 (188 aa).

Residues 1-15 (MSFTNTPERYGVISA) lie on the Cytoplasmic side of the membrane. Residues 16–36 (AFHWLSAIIVYGMFALGLWMV) form a helical membrane-spanning segment. 2 residues coordinate heme b: His18 and His52. The Periplasmic portion of the chain corresponds to 37 to 54 (TLSYYDGWYHKAPELHKS). The chain crosses the membrane as a helical span at residues 55–75 (IGILLMMGLVIRVLWRVISPP). Residues 76–91 (PGPLPSYSPMTRLAAR) are Cytoplasmic-facing. Residues 92-112 (AGHLALYLLLFAIGISGYLIS) form a helical membrane-spanning segment. Residues 113–143 (TADGKPISVFGWFDVPATLADAGAQADFAGA) lie on the Periplasmic side of the membrane. A helical transmembrane segment spans residues 144 to 164 (LHFWLAWSVVVLSVMHGFMAL). Heme b contacts are provided by His145 and His159. The Cytoplasmic segment spans residues 165 to 188 (KHHFIDKDDTLKRMLGKSSSDYGV).

It belongs to the cytochrome b561 family. It depends on heme b as a cofactor.

The protein localises to the cell inner membrane. In Escherichia coli (strain K12), this protein is Cytochrome b561 homolog 2 (yceJ).